A 496-amino-acid chain; its full sequence is Cytochrome P450 monooxygenase cle4 (496 aa).

Residues 12 to 34 form a helical membrane-spanning segment; the sequence is FFTSPFPLTVGILSISLSGVLWY. Residue cysteine 435 participates in heme binding.

This sequence belongs to the cytochrome P450 family. Requires heme as cofactor.

It localises to the membrane. The protein operates within secondary metabolite biosynthesis; terpenoid biosynthesis. In terms of biological role, cytochrome P450 monooxygenase; part of the cluster A that mediates the biosynthesis of chevalone E and its oxidized derivatives that possess a unique five-membered lactone ring and can synergistically enhance the cytotoxicity of doxorubicin (DOX) in breast cancer cells. Within the pathway, cle4 is involved in hydroxylation of the chavalone E scaffold at positions C-11 and C-12 and contributes with cle2 to the production of seven oxidation derivatives. The molecular scaffold is commonly biosynthesized by a series of enzymes including the non-reducing polyketide synthase (NR-PKS) cle1 that produces the alpha-pyrone triacetic acid lactone (TAL); The membrane-bound prenyltransferase cle5 that accepts TAL as its substrate to perform a C-3 geranylgeranylation reaction, in which the pathway-dedicated GGPS cle6 is required to provide GGPP, the other substrate of cle5; the FAD-dependent monooxygenase Cle3 that forms an (S)-epoxide ring at the terminal olefin of the geranylgeranyl group; and the terpene cyclase Cle7 that catalyzes the cyclization of the prenyl group that yields the pentacyclic pathway intermediate chevalone E. Chevalone E can derivatize into seven new oxidized analogs by the cytochrome P450 monooxygenases cle2 (acting at C-20) and cle4 (acting at C-11 and C-12). This is Cytochrome P450 monooxygenase cle4 from Aspergillus versicolor.